Consider the following 212-residue polypeptide: uncharacterized protein (212 aa).

A disordered region spans residues 42 to 101 (GITGPKATKSPSRRTTRSPSPSRRTTRSSPSRRTTRSSPSRRTTRSPSPSGRRKQGGPAV). Residues 58–91 (RSPSPSRRTTRSSPSRRTTRSSPSRRTTRSPSPS) are compositionally biased toward low complexity.

This sequence belongs to the IIV-6 378R family.

This is an uncharacterized protein from Invertebrate iridescent virus 3 (IIV-3).